The chain runs to 310 residues: DNA damage-repair/toleration protein DRT102 (310 aa).

Ala2 is modified (N-acetylalanine). The 64-residue stretch at Ile219–Glu282 folds into the Cupin type-2 domain.

This chain is DNA damage-repair/toleration protein DRT102 (DRT102), found in Arabidopsis thaliana (Mouse-ear cress).